Consider the following 100-residue polypeptide: uncharacterized protein (100 aa).

As to quaternary structure, may interact with ribosomes.

This is an uncharacterized protein from Saccharomyces cerevisiae (strain ATCC 204508 / S288c) (Baker's yeast).